A 337-amino-acid polypeptide reads, in one-letter code: Holliday junction branch migration complex subunit RuvB (337 aa).

The segment at 1-179 (MTHQVSVLHQ…FSFTGRVAYY (179 aa)) is large ATPase domain (RuvB-L). ATP-binding positions include leucine 18, arginine 19, glycine 60, lysine 63, threonine 64, serine 65, 126–128 (EDY), arginine 169, tyrosine 179, and arginine 216. Threonine 64 contacts Mg(2+). Residues 180 to 250 (SDEDLATILR…VAEKALAMLL (71 aa)) are small ATPAse domain (RuvB-S). Residues 253–337 (EWGLNEIDIK…DNLQSLGEEK (85 aa)) are head domain (RuvB-H). DNA-binding residues include lysine 308 and arginine 313.

It belongs to the RuvB family. In terms of assembly, homohexamer. Forms an RuvA(8)-RuvB(12)-Holliday junction (HJ) complex. HJ DNA is sandwiched between 2 RuvA tetramers; dsDNA enters through RuvA and exits via RuvB. An RuvB hexamer assembles on each DNA strand where it exits the tetramer. Each RuvB hexamer is contacted by two RuvA subunits (via domain III) on 2 adjacent RuvB subunits; this complex drives branch migration. In the full resolvosome a probable DNA-RuvA(4)-RuvB(12)-RuvC(2) complex forms which resolves the HJ.

It is found in the cytoplasm. The enzyme catalyses ATP + H2O = ADP + phosphate + H(+). Its function is as follows. The RuvA-RuvB-RuvC complex processes Holliday junction (HJ) DNA during genetic recombination and DNA repair, while the RuvA-RuvB complex plays an important role in the rescue of blocked DNA replication forks via replication fork reversal (RFR). RuvA specifically binds to HJ cruciform DNA, conferring on it an open structure. The RuvB hexamer acts as an ATP-dependent pump, pulling dsDNA into and through the RuvAB complex. RuvB forms 2 homohexamers on either side of HJ DNA bound by 1 or 2 RuvA tetramers; 4 subunits per hexamer contact DNA at a time. Coordinated motions by a converter formed by DNA-disengaged RuvB subunits stimulates ATP hydrolysis and nucleotide exchange. Immobilization of the converter enables RuvB to convert the ATP-contained energy into a lever motion, pulling 2 nucleotides of DNA out of the RuvA tetramer per ATP hydrolyzed, thus driving DNA branch migration. The RuvB motors rotate together with the DNA substrate, which together with the progressing nucleotide cycle form the mechanistic basis for DNA recombination by continuous HJ branch migration. Branch migration allows RuvC to scan DNA until it finds its consensus sequence, where it cleaves and resolves cruciform DNA. The chain is Holliday junction branch migration complex subunit RuvB from Chlamydia abortus (strain DSM 27085 / S26/3) (Chlamydophila abortus).